Reading from the N-terminus, the 209-residue chain is Urease accessory protein UreG (209 aa).

11–18 contacts GTP; sequence GPVGSGKT.

The protein belongs to the SIMIBI class G3E GTPase family. UreG subfamily. In terms of assembly, homodimer. UreD, UreF and UreG form a complex that acts as a GTP-hydrolysis-dependent molecular chaperone, activating the urease apoprotein by helping to assemble the nickel containing metallocenter of UreC. The UreE protein probably delivers the nickel.

Its subcellular location is the cytoplasm. Functionally, facilitates the functional incorporation of the urease nickel metallocenter. This process requires GTP hydrolysis, probably effectuated by UreG. The polypeptide is Urease accessory protein UreG (Edwardsiella ictaluri (strain 93-146)).